A 236-amino-acid chain; its full sequence is Ras-related protein RabY (236 aa).

18–25 (GDRKTGKT) provides a ligand contact to GTP. An Effector region motif is present at residues 40 to 48 (YRQTNLLHF). Residues 66–70 (DSQAD) and 126–129 (NKSD) each bind GTP. Over residues 192–225 (QQQQQQQQQQQQQQQQQQQQQQQQQQQQQQQHQQ) the composition is skewed to low complexity. The segment at 192-236 (QQQQQQQQQQQQQQQQQQQQQQQQQQQQQQQHQQSSKTKIGCLIQ) is disordered. The residue at position 233 (Cys-233) is a Cysteine methyl ester. The S-geranylgeranyl cysteine moiety is linked to residue Cys-233. A propeptide spans 234 to 236 (LIQ) (removed in mature form).

Belongs to the small GTPase superfamily. Rab family.

It is found in the cell membrane. This chain is Ras-related protein RabY (rabY), found in Dictyostelium discoideum (Social amoeba).